Here is a 79-residue protein sequence, read N- to C-terminus: Conotoxin 12 (79 aa).

A signal peptide spans 1-22 (MKLTCVLIITVLFLTASQLITA). A propeptide spanning residues 23 to 47 (DYSRDQRQYRAVRLGDEMRNFKGAR) is cleaved from the precursor. Cystine bridges form between Cys49-Cys62, Cys56-Cys67, and Cys61-Cys77.

Belongs to the conotoxin O1 superfamily. In terms of tissue distribution, expressed by the venom duct.

It localises to the secreted. This chain is Conotoxin 12, found in Conus vexillum (Flag cone).